The chain runs to 255 residues: Putative keratin-87 protein (255 aa).

The IF rod domain maps to 1–255 (MEANSGRLAS…SRGCVRALVL (255 aa)). Coiled-coil stretches lie at residues 19 to 81 (LEGY…EIRV) and 147 to 227 (LRRT…VMNS).

This sequence belongs to the intermediate filament family. Heterotetramer of two type I and two type II keratins.

The polypeptide is Putative keratin-87 protein (KRT87P) (Homo sapiens (Human)).